Consider the following 742-residue polypeptide: Catalase-peroxidase (742 aa).

The disordered stretch occupies residues 1–43 (MSDSCPVAHEGNTQSTSESENPVIPSPTPAANRPRNNRDWWPN). Residues 11 to 20 (GNTQSTSESE) show a composition bias toward polar residues. A cross-link (tryptophyl-tyrosyl-methioninium (Trp-Tyr) (with M-257)) is located at residues 109 to 231 (WHAAGTYRIA…LGAVQMGLIY (123 aa)). Histidine 110 (proton acceptor) is an active-site residue. The tryptophyl-tyrosyl-methioninium (Tyr-Met) (with W-109) cross-link spans 231–257 (YVNPEGPNGQPDPLAAARDIRETFSRM). Histidine 272 provides a ligand contact to heme b.

Belongs to the peroxidase family. Peroxidase/catalase subfamily. As to quaternary structure, homodimer or homotetramer. Heme b is required as a cofactor. In terms of processing, formation of the three residue Trp-Tyr-Met cross-link is important for the catalase, but not the peroxidase activity of the enzyme.

The enzyme catalyses H2O2 + AH2 = A + 2 H2O. It carries out the reaction 2 H2O2 = O2 + 2 H2O. Bifunctional enzyme with both catalase and broad-spectrum peroxidase activity. The sequence is that of Catalase-peroxidase from Rhodococcus jostii (strain RHA1).